A 61-amino-acid chain; its full sequence is UPF0434 protein PFL_1779 (61 aa).

The protein belongs to the UPF0434 family.

In Pseudomonas fluorescens (strain ATCC BAA-477 / NRRL B-23932 / Pf-5), this protein is UPF0434 protein PFL_1779.